Reading from the N-terminus, the 156-residue chain is ATP synthase subunit b (156 aa).

A helical transmembrane segment spans residues 7-29 (LFGQTVAFILFVWFCMKFVWPPL).

It belongs to the ATPase B chain family. F-type ATPases have 2 components, F(1) - the catalytic core - and F(0) - the membrane proton channel. F(1) has five subunits: alpha(3), beta(3), gamma(1), delta(1), epsilon(1). F(0) has three main subunits: a(1), b(2) and c(10-14). The alpha and beta chains form an alternating ring which encloses part of the gamma chain. F(1) is attached to F(0) by a central stalk formed by the gamma and epsilon chains, while a peripheral stalk is formed by the delta and b chains.

Its subcellular location is the cell inner membrane. Functionally, f(1)F(0) ATP synthase produces ATP from ADP in the presence of a proton or sodium gradient. F-type ATPases consist of two structural domains, F(1) containing the extramembraneous catalytic core and F(0) containing the membrane proton channel, linked together by a central stalk and a peripheral stalk. During catalysis, ATP synthesis in the catalytic domain of F(1) is coupled via a rotary mechanism of the central stalk subunits to proton translocation. In terms of biological role, component of the F(0) channel, it forms part of the peripheral stalk, linking F(1) to F(0). This chain is ATP synthase subunit b, found in Shewanella frigidimarina (strain NCIMB 400).